The chain runs to 124 residues: Probable S-adenosyl-L-methionine-binding protein VNG_1115H (124 aa).

The TsaA-like domain maps to 3–124 (ATPIGYADTR…PVLDLKPALD (122 aa)). Residues 20-22 (PRQ), 58-59 (DD), R78, and 111-114 (AHGS) each bind S-adenosyl-L-methionine.

This sequence belongs to the tRNA methyltransferase O family.

The polypeptide is Probable S-adenosyl-L-methionine-binding protein VNG_1115H (Halobacterium salinarum (strain ATCC 700922 / JCM 11081 / NRC-1) (Halobacterium halobium)).